The sequence spans 504 residues: Xanthotoxol synthase (504 aa).

A helical membrane pass occupies residues 3-23 (PAAIFLILAIPIASVYLLFYH). The interval 363–368 (PGPLLI) is substrate specificity. Heme is bound at residue cysteine 444.

This sequence belongs to the cytochrome P450 family. It depends on heme as a cofactor.

It localises to the microsome membrane. It catalyses the reaction psoralen + reduced [NADPH--hemoprotein reductase] + O2 = xanthotoxol + oxidized [NADPH--hemoprotein reductase] + H2O + H(+). It carries out the reaction 6-methoxycoumarin + reduced [NADPH--hemoprotein reductase] + O2 = scopoletin + oxidized [NADPH--hemoprotein reductase] + H2O + H(+). The protein operates within secondary metabolite biosynthesis. Its function is as follows. Involved in the biosynthesis of coumarins and furanocoumarins (FCs), natural products required for defense responses against attacks by predators with potential medical and agroindustrial usages such as anticoagulant, rodenticide and artificial vanilla substitutes. Catalyzes the conversion of psoralen into xanthotoxol and of 6-methoxycoumarin into scopoletin. Can also convert with a lower efficiency scopoletin into fraxetin and 7-methoxycoumarin into daphnetin-7-methylether, and use 7-methoxy-3-methylcoumarin as substrate. This is Xanthotoxol synthase from Pastinaca sativa (Wild parsnip).